Reading from the N-terminus, the 303-residue chain is Crk-like protein (303 aa).

The SH2 domain maps to 14-102 (WYMGPVTRQE…LDTTTLIEPA (89 aa)). The SH3 1 domain occupies 123–183 (ENLEYVRTLY…PVPYVEKLVR (61 aa)). The residue at position 127 (Tyr-127) is a Phosphotyrosine. The interval 184–203 (SSPHGKHGNRNSNSYGIPEP) is disordered. Tyr-207 carries the phosphotyrosine modification. Positions 235 to 296 (NGPVFAKAIQ…PFTHVKIFDP (62 aa)) constitute an SH3 2 domain.

This sequence belongs to the CRK family. In terms of assembly, interacts with DOCK2 and EPOR. Interacts with phosphorylated CBLB and IRS4. Interacts with INPP5D/SHIP1. Interacts with BCAR1/CAS and NEDD9/HEF1. Post-translationally, phosphorylated on tyrosine. Phosphorylation is prominent during early development, but decreases at later embryonic stages and in newborn mice.

Functionally, may mediate the transduction of intracellular signals. The polypeptide is Crk-like protein (Crkl) (Mus musculus (Mouse)).